Reading from the N-terminus, the 187-residue chain is Protein GrpE (187 aa).

Positions 1-38 are disordered; that stretch reads MSEEKQTVEQNETEEQEIIEEQAAADEQQEETNESELL. Acidic residues predominate over residues 11–34; sequence NETEEQEIIEEQAAADEQQEETNE.

This sequence belongs to the GrpE family. Homodimer.

The protein localises to the cytoplasm. Functionally, participates actively in the response to hyperosmotic and heat shock by preventing the aggregation of stress-denatured proteins, in association with DnaK and GrpE. It is the nucleotide exchange factor for DnaK and may function as a thermosensor. Unfolded proteins bind initially to DnaJ; upon interaction with the DnaJ-bound protein, DnaK hydrolyzes its bound ATP, resulting in the formation of a stable complex. GrpE releases ADP from DnaK; ATP binding to DnaK triggers the release of the substrate protein, thus completing the reaction cycle. Several rounds of ATP-dependent interactions between DnaJ, DnaK and GrpE are required for fully efficient folding. The polypeptide is Protein GrpE (Bacillus subtilis (strain 168)).